We begin with the raw amino-acid sequence, 417 residues long: UDP-N-acetylglucosamine 1-carboxyvinyltransferase 3 (417 aa).

22–23 (KN) is a binding site for phosphoenolpyruvate. Arg92 contributes to the UDP-N-acetyl-alpha-D-glucosamine binding site. The Proton donor role is filled by Cys116. Cys116 bears the 2-(S-cysteinyl)pyruvic acid O-phosphothioketal mark. UDP-N-acetyl-alpha-D-glucosamine-binding positions include 121 to 125 (RPIDQ), Asp304, and Ile326.

It belongs to the EPSP synthase family. MurA subfamily.

It is found in the cytoplasm. It carries out the reaction phosphoenolpyruvate + UDP-N-acetyl-alpha-D-glucosamine = UDP-N-acetyl-3-O-(1-carboxyvinyl)-alpha-D-glucosamine + phosphate. The protein operates within cell wall biogenesis; peptidoglycan biosynthesis. Its function is as follows. Cell wall formation. Adds enolpyruvyl to UDP-N-acetylglucosamine. This Caldanaerobacter subterraneus subsp. tengcongensis (strain DSM 15242 / JCM 11007 / NBRC 100824 / MB4) (Thermoanaerobacter tengcongensis) protein is UDP-N-acetylglucosamine 1-carboxyvinyltransferase 3.